Reading from the N-terminus, the 584-residue chain is NADPH-dependent diflavin oxidoreductase 1 (584 aa).

Residues 6-150 form the Flavodoxin-like domain; it reads IYILYGSETG…VFAYWCNHLY (145 aa). FMN-binding positions include 12-17, 59-62, 97-106, and E132; these read SETGTA, STTG, and CGDTSYTRFN. The region spanning 199–436 is the FAD-binding FR-type domain; sequence RGKIEATLVH…LPGFLNLSYQ (238 aa). Residues R343, 373–376, and 407–410 each bind FAD; these read RQYS and GICS. NADP(+) is bound by residues T448, 503-504, and 509-513; these read SR and KKYVQ. W584 serves as a coordination point for FAD.

Belongs to the NADPH-dependent diflavin oxidoreductase NDOR1 family. It in the N-terminal section; belongs to the flavodoxin family. This sequence in the C-terminal section; belongs to the flavoprotein pyridine nucleotide cytochrome reductase family. Interacts with dre2; as part of the cytosolic iron-sulfur (Fe-S) protein assembly (CIA) machinery. FAD is required as a cofactor. FMN serves as cofactor.

Its subcellular location is the cytoplasm. It is found in the mitochondrion. It catalyses the reaction 2 oxidized [2Fe-2S]-[protein] + NADPH = 2 reduced [2Fe-2S]-[protein] + NADP(+) + H(+). NADPH-dependent reductase which is a central component of the cytosolic iron-sulfur (Fe-S) protein assembly (CIA) machinery. Transfers electrons from NADPH via its FAD and FMN prosthetic groups to the [2Fe-2S] cluster of dre2, another key component of the CIA machinery. In turn, this reduced cluster provides electrons for assembly of cytosolic iron-sulfur cluster proteins. Positively controls H(2)O(2)-induced cell death. In Schizosaccharomyces pombe (strain 972 / ATCC 24843) (Fission yeast), this protein is NADPH-dependent diflavin oxidoreductase 1.